Reading from the N-terminus, the 305-residue chain is Porphobilinogen deaminase (305 aa).

Residue C238 is modified to S-(dipyrrolylmethanemethyl)cysteine.

Belongs to the HMBS family. Monomer. Dipyrromethane is required as a cofactor.

The catalysed reaction is 4 porphobilinogen + H2O = hydroxymethylbilane + 4 NH4(+). Its pathway is porphyrin-containing compound metabolism; protoporphyrin-IX biosynthesis; coproporphyrinogen-III from 5-aminolevulinate: step 2/4. Tetrapolymerization of the monopyrrole PBG into the hydroxymethylbilane pre-uroporphyrinogen in several discrete steps. This Rubrobacter xylanophilus (strain DSM 9941 / JCM 11954 / NBRC 16129 / PRD-1) protein is Porphobilinogen deaminase.